The following is a 545-amino-acid chain: CTP synthase (545 aa).

Residues 1-266 (MTTNYIFVTG…DDYICKRFSL (266 aa)) form an amidoligase domain region. Ser-14 serves as a coordination point for CTP. Ser-14 is a UTP binding site. Residues 15-20 (SLGKGI) and Asp-72 each bind ATP. Positions 72 and 140 each coordinate Mg(2+). CTP is bound by residues 147–149 (DIE), 187–192 (KTKPTQ), and Lys-223. Residues 187-192 (KTKPTQ) and Lys-223 contribute to the UTP site. An ATP-binding site is contributed by 239-241 (KDV). A Glutamine amidotransferase type-1 domain is found at 291 to 542 (TIGMVGKYIE…VKAASEYQKR (252 aa)). Residue Gly-352 coordinates L-glutamine. Cys-379 (nucleophile; for glutamine hydrolysis) is an active-site residue. L-glutamine-binding positions include 380 to 383 (LGMQ), Glu-403, and Arg-470. Residues His-515 and Glu-517 contribute to the active site.

The protein belongs to the CTP synthase family. In terms of assembly, homotetramer.

It carries out the reaction UTP + L-glutamine + ATP + H2O = CTP + L-glutamate + ADP + phosphate + 2 H(+). The catalysed reaction is L-glutamine + H2O = L-glutamate + NH4(+). The enzyme catalyses UTP + NH4(+) + ATP = CTP + ADP + phosphate + 2 H(+). Its pathway is pyrimidine metabolism; CTP biosynthesis via de novo pathway; CTP from UDP: step 2/2. With respect to regulation, allosterically activated by GTP, when glutamine is the substrate; GTP has no effect on the reaction when ammonia is the substrate. The allosteric effector GTP functions by stabilizing the protein conformation that binds the tetrahedral intermediate(s) formed during glutamine hydrolysis. Inhibited by the product CTP, via allosteric rather than competitive inhibition. Its function is as follows. Catalyzes the ATP-dependent amination of UTP to CTP with either L-glutamine or ammonia as the source of nitrogen. Regulates intracellular CTP levels through interactions with the four ribonucleotide triphosphates. The polypeptide is CTP synthase (Klebsiella pneumoniae subsp. pneumoniae (strain ATCC 700721 / MGH 78578)).